Consider the following 123-residue polypeptide: Holo-[acyl-carrier-protein] synthase (123 aa).

Residues aspartate 8 and glutamate 56 each contribute to the Mg(2+) site.

The protein belongs to the P-Pant transferase superfamily. AcpS family. Mg(2+) serves as cofactor.

It localises to the cytoplasm. The catalysed reaction is apo-[ACP] + CoA = holo-[ACP] + adenosine 3',5'-bisphosphate + H(+). Its function is as follows. Transfers the 4'-phosphopantetheine moiety from coenzyme A to a Ser of acyl-carrier-protein. The chain is Holo-[acyl-carrier-protein] synthase from Clostridium botulinum (strain Alaska E43 / Type E3).